Reading from the N-terminus, the 993-residue chain is Nisin biosynthesis protein NisB (993 aa).

A helical membrane pass occupies residues 838-851 (AIFCADSKIIPNLL).

This sequence to B.subtilis SpaB and S.epidermidis EpiB.

The protein localises to the cell membrane. Involved in the post-translational modification of the lantibiotic nisin. The sequence is that of Nisin biosynthesis protein NisB (nisB) from Lactococcus lactis subsp. lactis (Streptococcus lactis).